The primary structure comprises 257 residues: Pyridoxal phosphate homeostasis protein (257 aa).

N-acetylserine is present on Ser2. Residue Lys49 is modified to N6-(pyridoxal phosphate)lysine.

Belongs to the pyridoxal phosphate-binding protein YggS/PROSC family.

The protein resides in the cytoplasm. The protein localises to the nucleus. In terms of biological role, pyridoxal 5'-phosphate (PLP)-binding protein, which may be involved in intracellular homeostatic regulation of pyridoxal 5'-phosphate (PLP), the active form of vitamin B6. The chain is Pyridoxal phosphate homeostasis protein from Saccharomyces cerevisiae (strain ATCC 204508 / S288c) (Baker's yeast).